The primary structure comprises 306 residues: Dermonecrotic toxin LiSicTox-alphaIA1a (306 aa).

The first 18 residues, 1 to 18 (MLPYIVLVLGCWSVLSQA), serve as a signal peptide directing secretion. A propeptide spanning residues 19-26 (AQTDDEER) is cleaved from the precursor. Histidine 38 is a catalytic residue. Mg(2+)-binding residues include glutamate 58 and aspartate 60. The active-site Nucleophile is the histidine 74. Intrachain disulfides connect cysteine 78/cysteine 84 and cysteine 80/cysteine 223. Residue aspartate 118 coordinates Mg(2+).

It belongs to the arthropod phospholipase D family. Class II subfamily. Class IIa sub-subfamily. The cofactor is Mg(2+). In terms of tissue distribution, expressed by the venom gland.

Its subcellular location is the secreted. It carries out the reaction an N-(acyl)-sphingosylphosphocholine = an N-(acyl)-sphingosyl-1,3-cyclic phosphate + choline. The enzyme catalyses an N-(acyl)-sphingosylphosphoethanolamine = an N-(acyl)-sphingosyl-1,3-cyclic phosphate + ethanolamine. The catalysed reaction is a 1-acyl-sn-glycero-3-phosphocholine = a 1-acyl-sn-glycero-2,3-cyclic phosphate + choline. It catalyses the reaction a 1-acyl-sn-glycero-3-phosphoethanolamine = a 1-acyl-sn-glycero-2,3-cyclic phosphate + ethanolamine. It carries out the reaction 1-hexadecanoyl-sn-glycero-3-phosphocholine = 1-hexadecanoyl-sn-glycero-2,3-cyclic phosphate + choline. With respect to regulation, catalytic activity and hemolysis are inhibited by divalent ion chelators (1,10-phenanthroline, EDTA, and EGTA). In terms of biological role, dermonecrotic toxins cleave the phosphodiester linkage between the phosphate and headgroup of certain phospholipids (sphingolipid and lysolipid substrates), forming an alcohol (often choline) and a cyclic phosphate. This toxin acts on sphingomyelin (SM) with high activity. It discriminate between the number of carbon atoms in the substrates, since it prefers SM with six carbons in the fatty acid chain (SM6:0) to other SMs (SM12:0 &gt; SM16:0 &gt; SM18:0 &gt; SM2:0 &gt; SM24:0). It also acts on lysophosphatidylcholine (LPC) (LPC16:0 = LPC12:0 &gt; LPC18:0), and lyso-platelet activating factor (LPAF, an alkyl-LPC) but not on phosphatidylcholine (PC). It may also act on ceramide phosphoethanolamine (CPE), lysophosphatidylcholine (LPC) and lysophosphatidylethanolamine (LPE), but not on lysophosphatidylserine (LPS), and lysophosphatidylglycerol (LPG). It acts by transphosphatidylation, releasing exclusively cyclic phosphate products as second products. In vivo, it induces dermonecrosis, vascular permeability, platelet aggregation, inflammatory response, edema and cytotoxicity against renal epithelial cells. It causes direct nephrotoxicity and is directly toxic to liver. It also induces hemolysis in a complement-dependent manner as well as in a complement-independent manner. The hemolysis provoked in a complement-independent manner is composed of several steps. The toxin binds to erythrocyte membranes, hydrolyzes membrane phospholipids (SM and LPC) thus generating metabolism products that cause hemolysis, probably by provoking an increase of calcium inside cells. The calcium influx is due to the opening of L-type calcium channels, since L-type calcium channel blockers inhibit calcium influx. Is lethal to mice when intraperitoneally injected. This is Dermonecrotic toxin LiSicTox-alphaIA1a from Loxosceles intermedia (Brown spider).